The primary structure comprises 509 residues: Light-independent protochlorophyllide reductase subunit B (509 aa).

Asp-36 serves as a coordination point for [4Fe-4S] cluster. Asp-295 serves as the catalytic Proton donor. 430–431 (GM) provides a ligand contact to substrate.

The protein belongs to the ChlB/BchB/BchZ family. As to quaternary structure, protochlorophyllide reductase is composed of three subunits; ChlL, ChlN and ChlB. Forms a heterotetramer of two ChlB and two ChlN subunits. Requires [4Fe-4S] cluster as cofactor.

It localises to the plastid. It is found in the chloroplast. The enzyme catalyses chlorophyllide a + oxidized 2[4Fe-4S]-[ferredoxin] + 2 ADP + 2 phosphate = protochlorophyllide a + reduced 2[4Fe-4S]-[ferredoxin] + 2 ATP + 2 H2O. Its pathway is porphyrin-containing compound metabolism; chlorophyll biosynthesis (light-independent). Component of the dark-operative protochlorophyllide reductase (DPOR) that uses Mg-ATP and reduced ferredoxin to reduce ring D of protochlorophyllide (Pchlide) to form chlorophyllide a (Chlide). This reaction is light-independent. The NB-protein (ChlN-ChlB) is the catalytic component of the complex. In Mesostigma viride (Green alga), this protein is Light-independent protochlorophyllide reductase subunit B.